Here is a 137-residue protein sequence, read N- to C-terminus: Large ribosomal subunit protein uL16 (137 aa).

Belongs to the universal ribosomal protein uL16 family. Part of the 50S ribosomal subunit.

Functionally, binds 23S rRNA and is also seen to make contacts with the A and possibly P site tRNAs. This chain is Large ribosomal subunit protein uL16, found in Streptococcus mutans serotype c (strain ATCC 700610 / UA159).